The primary structure comprises 186 residues: ADP-ribosylation factor-like protein 8B (186 aa).

Position 1 is an N-acetylmethionine (M1). Positions 1–19 (MLALISRLLDWFRSLFWKE) form an intramembrane region, note=Mediates targeting to membranes. Residues 29–35 (QYSGKTT), 71–75 (DIGGQ), and 130–133 (NKRD) contribute to the GTP site. K141 is covalently cross-linked (Glycyl lysine isopeptide (Lys-Gly) (interchain with G-Cter in ubiquitin)).

It belongs to the small GTPase superfamily. Arf family. As to quaternary structure, interacts with tubulin. Interacts with BORCS5; recruits ARL8B to lysosomes. Interacts with VPS41; the interaction mediates the recruitment of the HOPS complex to lysosomes. Interacts (GTP-bound form) with PLEKHM2 (via RUN domain); the interaction is required to recruit the motor protein kinesin-1 on lysosomes. Interacts (GTP-bound form) with PLEKHM1 (via RUN domain); the interaction is required for PLEKHM1 localization to lysosomes and for ARL8B function in delivery and degradation of endocytic and autophagic cargo in lysosomes. PLEKHM1 and PLEKHM2 compete for interaction with ARL8B. Interacts (GTP-bound form) with RUFY1; the interaction is required for RUFY1 endosomal location. When GTP-bound, interacts with RUFY3 and RUFY4, but not with RUFY1, nor RUFY2. Ubiquitinated at Lys-141 by RNF167, leading to its degradation. Ubiquitously expressed.

It is found in the late endosome membrane. Its subcellular location is the lysosome membrane. The protein resides in the cytoplasm. It localises to the cytoskeleton. The protein localises to the spindle. It is found in the cell projection. Its subcellular location is the axon. The protein resides in the synapse. It localises to the cytolytic granule membrane. The protein localises to the early endosome membrane. It carries out the reaction GTP + H2O = GDP + phosphate + H(+). Its function is as follows. Small GTPase which cycles between active GTP-bound and inactive GDP-bound states. In its active state, binds to a variety of effector proteins playing a key role in the regulation of lysosomal positioning which is important for nutrient sensing, natural killer cell-mediated cytotoxicity and antigen presentation. Along with its effectors, orchestrates lysosomal transport and fusion. Localizes specifically to lysosomal membranes and mediates anterograde lysosomal motility by recruiting PLEKHM2, which in turn recruits the motor protein kinesin-1 on lysosomes. Required for lysosomal and cytolytic granule exocytosis. Critical factor involved in NK cell-mediated cytotoxicity. Drives the polarization of cytolytic granules and microtubule-organizing centers (MTOCs) toward the immune synapse between effector NK lymphocytes and target cells. In neurons, mediates the anterograde axonal long-range transport of presynaptic lysosome-related vesicles required for presynaptic biogenesis and synaptic function. Also acts as a regulator of endosome to lysosome trafficking pathways of special significance for host defense. Recruits RUFY1 onto early endosomes regulating endosomes to trans-Golgi network proteins retrieval. Regulates cargo trafficking to lysosomes by binding to PLEKHM1 and recruiting the HOPS subunit VPS41, resulting in functional assembly of the HOPS complex on lysosomal membranes. Plays an important role in cargo delivery to lysosomes for antigen presentation and microbial killing. Directs the intersection of CD1d with lipid antigens in lysosomes, and plays a role in intersecting phagosomes with lysosomes to generate phagolysosomes that kill microbes. Involved in the process of MHC II presentation. Regulates the delivery of antigens to lysosomes and the formation of MHC II-peptide complexes through the recruitment of the HOPS complex to lysosomes allowing the fusion of late endosomes to lysosomes. May play a role in chromosome segregation. Functionally, (Microbial infection) During Mycobacterium tuberculosis (Mtb) infection, is required for plasma membrane repair by controlling the exocytosis of lysosomes in macrophages. ARL8B secretion pathway is crucial to control the type of cell death of the M.tuberculosis-infected macrophages, distinguishing avirulent from virulent Mtb induced necrotic cell death. (Microbial infection) During infection, coronaviruses such as SARS-CoV-2 and the chaperone HSPA5/GRP78 are probably co-released through ARL8B-dependent lysosomal exocytic pathway for unconventional egress. In Homo sapiens (Human), this protein is ADP-ribosylation factor-like protein 8B.